A 218-amino-acid chain; its full sequence is Keratin-associated protein 10-8 (218 aa).

The interval 26–202 (CGNQVSSPSA…FCQPSCCHPA (177 aa)) is 16 X 5 AA repeats of C-C-X(3). Tandem repeats lie at residues 50–54 (CCEPT), 55–59 (CCAPS), 60–64 (CCAPA), 86–90 (CSSSS), 96–100 (CCVPV), 101–105 (CCRPV), 111–115 (CCRPV), 121–125 (CCTPV), 131–135 (CCRPV), 136–140 (CCRPV), 141–145 (CCRPV), 151–155 (CCRPM), 161–167 (PCSAPSS), 168–172 (CCRPS), 187–191 (CCVPT), and 198–202 (CCHPA).

The protein belongs to the KRTAP type 10 family. Interacts with hair keratins.

Functionally, in the hair cortex, hair keratin intermediate filaments are embedded in an interfilamentous matrix, consisting of hair keratin-associated proteins (KRTAP), which are essential for the formation of a rigid and resistant hair shaft through their extensive disulfide bond cross-linking with abundant cysteine residues of hair keratins. The matrix proteins include the high-sulfur and high-glycine-tyrosine keratins. The protein is Keratin-associated protein 10-8 of Bos taurus (Bovine).